Here is a 256-residue protein sequence, read N- to C-terminus: Ubiquinone/menaquinone biosynthesis C-methyltransferase UbiE (256 aa).

A compositionally biased stretch (basic and acidic residues) spans 1 to 12 (MNDQRKGDHAEP). Residues 1-23 (MNDQRKGDHAEPTTHFGYQDVPE) are disordered. S-adenosyl-L-methionine contacts are provided by residues threonine 79, aspartate 100, and 128 to 129 (DA).

It belongs to the class I-like SAM-binding methyltransferase superfamily. MenG/UbiE family.

It catalyses the reaction a 2-demethylmenaquinol + S-adenosyl-L-methionine = a menaquinol + S-adenosyl-L-homocysteine + H(+). The catalysed reaction is a 2-methoxy-6-(all-trans-polyprenyl)benzene-1,4-diol + S-adenosyl-L-methionine = a 5-methoxy-2-methyl-3-(all-trans-polyprenyl)benzene-1,4-diol + S-adenosyl-L-homocysteine + H(+). It functions in the pathway quinol/quinone metabolism; menaquinone biosynthesis; menaquinol from 1,4-dihydroxy-2-naphthoate: step 2/2. It participates in cofactor biosynthesis; ubiquinone biosynthesis. In terms of biological role, methyltransferase required for the conversion of demethylmenaquinol (DMKH2) to menaquinol (MKH2) and the conversion of 2-polyprenyl-6-methoxy-1,4-benzoquinol (DDMQH2) to 2-polyprenyl-3-methyl-6-methoxy-1,4-benzoquinol (DMQH2). The protein is Ubiquinone/menaquinone biosynthesis C-methyltransferase UbiE of Pseudomonas putida (strain ATCC 700007 / DSM 6899 / JCM 31910 / BCRC 17059 / LMG 24140 / F1).